A 272-amino-acid chain; its full sequence is Dermonecrotic toxin SpeSicTox-betaIB2b (272 aa).

The active site involves His-5. Residues Glu-25 and Asp-27 each coordinate Mg(2+). His-41 acts as the Nucleophile in catalysis. Disulfide bonds link Cys-45-Cys-51 and Cys-47-Cys-191. Position 85 (Asp-85) interacts with Mg(2+).

This sequence belongs to the arthropod phospholipase D family. Class II subfamily. Requires Mg(2+) as cofactor. Expressed by the venom gland.

Its subcellular location is the secreted. It catalyses the reaction an N-(acyl)-sphingosylphosphocholine = an N-(acyl)-sphingosyl-1,3-cyclic phosphate + choline. The catalysed reaction is an N-(acyl)-sphingosylphosphoethanolamine = an N-(acyl)-sphingosyl-1,3-cyclic phosphate + ethanolamine. It carries out the reaction a 1-acyl-sn-glycero-3-phosphocholine = a 1-acyl-sn-glycero-2,3-cyclic phosphate + choline. The enzyme catalyses a 1-acyl-sn-glycero-3-phosphoethanolamine = a 1-acyl-sn-glycero-2,3-cyclic phosphate + ethanolamine. In terms of biological role, dermonecrotic toxins cleave the phosphodiester linkage between the phosphate and headgroup of certain phospholipids (sphingolipid and lysolipid substrates), forming an alcohol (often choline) and a cyclic phosphate. This toxin acts on sphingomyelin (SM). It may also act on ceramide phosphoethanolamine (CPE), lysophosphatidylcholine (LPC) and lysophosphatidylethanolamine (LPE), but not on lysophosphatidylserine (LPS), and lysophosphatidylglycerol (LPG). It acts by transphosphatidylation, releasing exclusively cyclic phosphate products as second products. Induces dermonecrosis, hemolysis, increased vascular permeability, edema, inflammatory response, and platelet aggregation. This chain is Dermonecrotic toxin SpeSicTox-betaIB2b, found in Sicarius peruensis (Six-eyed sand spider).